The chain runs to 49 residues: Large ribosomal subunit protein bL33B (49 aa).

It belongs to the bacterial ribosomal protein bL33 family.

The protein is Large ribosomal subunit protein bL33B of Lactobacillus gasseri (strain ATCC 33323 / DSM 20243 / BCRC 14619 / CIP 102991 / JCM 1131 / KCTC 3163 / NCIMB 11718 / NCTC 13722 / AM63).